We begin with the raw amino-acid sequence, 256 residues long: Polycomb group RING finger protein 5 (256 aa).

The segment at 18-57 (CYICKGYLIKPTTVTECLHTFCKTCIVQHFEDSNDCPRCG) adopts an RING-type zinc-finger fold. Basic and acidic residues-rich tracts occupy residues 94 to 103 (ESEFWKKNKP) and 110 to 120 (DTSKADKPKVD). Residues 94 to 133 (ESEFWKKNKPQENGQDDTSKADKPKVDEEGDENEDDKDYH) form a disordered region.

Component of a PRC1-like complex that contains PCGF5, RNF2 and UBE2D3. Interacts with RNF2; the interaction is direct. Interacts with CBX6, CBX7 and CBX8. Interacts with AUTS2; the interaction is direct. Identified in a complex that contains AUTS2, PCGF5, CSNK2B and RNF2.

It is found in the nucleus. It localises to the nucleoplasm. Functionally, component of a Polycomb group (PcG) multiprotein PRC1-like complex, a complex class required to maintain the transcriptionally repressive state of many genes, including Hox genes, throughout development. PcG PRC1 complex acts via chromatin remodeling and modification of histones; it mediates monoubiquitination of histone H2A 'Lys-119', rendering chromatin heritably changed in its expressibility. Within the PRC1-like complex, regulates RNF2 ubiquitin ligase activity. Plays a redundant role with PCGF3 as part of a PRC1-like complex that mediates monoubiquitination of histone H2A 'Lys-119' on the X chromosome and is required for normal silencing of one copy of the X chromosome in XX females. The polypeptide is Polycomb group RING finger protein 5 (PCGF5) (Homo sapiens (Human)).